The following is a 265-amino-acid chain: Large ribosomal subunit protein eL8 (265 aa).

The protein belongs to the eukaryotic ribosomal protein eL8 family. As to quaternary structure, interacts with cmd-1 in the presence of Ca(2+).

This is Large ribosomal subunit protein eL8 from Caenorhabditis elegans.